Consider the following 377-residue polypeptide: Stimulator of interferon genes protein 7 (377 aa).

4 helical membrane-spanning segments follow: residues 30–50 (TAAI…FLAV), 57–77 (THFL…GELL), 106–126 (FTFD…LILC), and 141–161 (FAIL…LVGL).

It belongs to the STING family.

The protein localises to the membrane. Functionally, facilitator of innate immune signaling that acts as a sensor of second messenger signals produced by cyclic GMP-AMP synthase-like receptors (cGLRs) and promotes the production of type I interferon. Innate immune response is triggered in response to nucleotides from viruses and bacteria delivered to the cytoplasm. Acts by binding cyclic dinucleotides: recognizes and binds a large variety of 2'-3'- and 3'-3' linked cyclic dinucleotides (2'-3'-cGAMP, 3'-3'-cGAMP, 2',3'-cUAMP, 3',3'-cUAMP and/or 3',3'-c-di-GMP) second messengers produced by cGLRs in response to nucleotides in the cytosol, such as double-stranded RNA (dsRNA). Upon binding to cyclic dinucleotides, oligomerizes and promotes the recruitment and subsequent activation of the transcription factor IRF3 to induce expression of type I interferon. The polypeptide is Stimulator of interferon genes protein 7 (Stylophora pistillata (Smooth cauliflower coral)).